Reading from the N-terminus, the 441-residue chain is Gamma-glutamyl phosphate reductase (441 aa).

The protein belongs to the gamma-glutamyl phosphate reductase family.

It is found in the cytoplasm. The enzyme catalyses L-glutamate 5-semialdehyde + phosphate + NADP(+) = L-glutamyl 5-phosphate + NADPH + H(+). Its pathway is amino-acid biosynthesis; L-proline biosynthesis; L-glutamate 5-semialdehyde from L-glutamate: step 2/2. Functionally, catalyzes the NADPH-dependent reduction of L-glutamate 5-phosphate into L-glutamate 5-semialdehyde and phosphate. The product spontaneously undergoes cyclization to form 1-pyrroline-5-carboxylate. This is Gamma-glutamyl phosphate reductase from Hydrogenobaculum sp. (strain Y04AAS1).